Reading from the N-terminus, the 445-residue chain is Mannan endo-1,4-beta-mannosidase 2 (445 aa).

A signal peptide spans 1–27 (MAVGNGLILYHILGLASCIALVYFSLG). Tryptophan 110 contacts substrate. Residue asparagine 181 is glycosylated (N-linked (GlcNAc...) asparagine). Asparagine 226 is a binding site for substrate. Catalysis depends on glutamate 227, which acts as the Proton donor. Tyrosine 309 serves as a coordination point for substrate. Glutamate 349 functions as the Nucleophile in the catalytic mechanism. Tryptophan 391 contributes to the substrate binding site.

Belongs to the glycosyl hydrolase 5 (cellulase A) family. In terms of tissue distribution, expressed in stems and seeds, and at lower levels in roots and leaves.

It is found in the secreted. It carries out the reaction Random hydrolysis of (1-&gt;4)-beta-D-mannosidic linkages in mannans, galactomannans and glucomannans.. The polypeptide is Mannan endo-1,4-beta-mannosidase 2 (MAN2) (Oryza sativa subsp. japonica (Rice)).